A 397-amino-acid polypeptide reads, in one-letter code: G2/mitotic-specific cyclin-B2 (397 aa).

Disordered stretches follow at residues 1–20 and 64–97; these read MALL…DTGV and KVTH…PEDV. Thr8 is modified (phosphothreonine). Ser11 bears the Phosphoserine mark. Positions 64–74 are enriched in polar residues; it reads KVTHVNKQPKP. Phosphoserine occurs at positions 77, 98, and 391.

The protein belongs to the cyclin family. Cyclin AB subfamily. In terms of assembly, interacts with the CDK1 protein kinase to form a serine/threonine kinase holoenzyme complex also known as maturation promoting factor (MPF). The cyclin subunit imparts substrate specificity to the complex.

Functionally, essential for the control of the cell cycle at the G2/M (mitosis) transition. This chain is G2/mitotic-specific cyclin-B2 (CCNB2), found in Mesocricetus auratus (Golden hamster).